A 3165-amino-acid chain; its full sequence is Protein eyes shut homolog (3165 aa).

The signal sequence occupies residues 1–21 (MTDKSIVILSLMVFHSSFING). N-linked (GlcNAc...) asparagine glycosylation occurs at N166. 3 consecutive EGF-like domains span residues 170-212 (KQQF…KYCQ), 213-254 (ELDA…KNCS), and 256-292 (IIGQ…PFCE). Disulfide bonds link C174-C189, C183-C200, C202-C211, C217-C228, C222-C242, C244-C253, C260-C270, C265-C280, and C282-C291. N-linked (GlcNAc...) asparagine glycosylation is found at N269 and N272. N311 and N343 each carry an N-linked (GlcNAc...) asparagine glycan. 2 EGF-like domains span residues 332-368 (DVSE…LLCK) and 370-406 (IQTS…KNCE). 4 cysteine pairs are disulfide-bonded: C341–C356, C358–C367, C374–C385, and C396–C405. N-linked (GlcNAc...) asparagine glycosylation is found at N506 and N566. EGF-like domains follow at residues 567–602 (TTDD…RLCV) and 643–679 (DTED…TQCE). 46 cysteine pairs are disulfide-bonded: C575-C590, C592-C601, C669-C678, C685-C696, C690-C705, C707-C719, C737-C748, C742-C757, C759-C768, C775-C786, C780-C795, C797-C806, C813-C824, C818-C835, C837-C846, C853-C866, C860-C876, C878-C887, C894-C905, C899-C914, C916-C925, C932-C943, C937-C952, C954-C963, C970-C981, C975-C990, C992-C1001, C1008-C1019, C1013-C1028, C1030-C1039, C1046-C1056, C1051-C1065, C1067-C1076, C1083-C1094, C1088-C1103, C1105-C1114, C1121-C1137, C1131-C1147, C1149-C1158, C1165-C1176, C1170-C1185, C1187-C1196, C2037-C2063, C2103-C2114, C2108-C2128, and C2130-C2139. An EGF-like 8; calcium-binding domain is found at 681 to 720 (DIDECASHPCKNGATCIDQPGNYFCQCVPPFKVVDGFSCL). The EGF-like 9; calcium-binding domain maps to 733-769 (DIDDCILNACEHNSTCKDLHLSYQCVCLSDWEGNFCE). An EGF-like 10; calcium-binding domain is found at 771 to 807 (ESNECKMNPCKNNSTCTDLYKSYRCECTSGWTGQNCS). EGF-like domains are found at residues 809-847 (EINE…QFCH), 849-888 (RYNL…KNCE), and 890-926 (DVKD…SLCE). The 37-residue stretch at 928–964 (EINECSSEPCKNNGTCVDLTNRFFCNCEPEYHGPFCE) folds into the EGF-like 14; calcium-binding domain. The 37-residue stretch at 966–1002 (DVNKCKISPCLDEENCVYRTDGYNCLCAPGYTGINCE) folds into the EGF-like 15 domain. Residues 1004–1040 (NLDECLSEPCLHDGVCIDGINHYTCDCKSGFFGTHCE) enclose the EGF-like 16; calcium-binding domain. EGF-like domains follow at residues 1042–1077 (NAND…TQCK), 1079–1115 (KIND…AYCE), and 1117–1159 (SIDN…QFCE). In terms of domain architecture, EGF-like 20; calcium-binding spans 1161-1197 (NINECSSSPCLHGADCEDHINGYVCKCQPGWSGHHCE). A Laminin G-like 1 domain is found at 1883-2063 (FSCVRYYGDS…AVKNYHINNC (181 aa)). The EGF-like 21 domain maps to 2099–2140 (APSVCQQDVCHNGGTCHAIFLSSGIVSFQCDCPLHFTGRFCE). Residues 2145-2339 (LFFPSFNGNS…NIENCHVPWC (195 aa)) form the Laminin G-like 2 domain. N-linked (GlcNAc...) asparagine glycosylation is present at N2170. EGF-like domains follow at residues 2335–2368 (HVPW…YSGK) and 2371–2408 (QFAS…PLCT). 19 disulfide bridges follow: C2339–C2350, C2344–C2359, C2375–C2386, C2380–C2396, C2398–C2407, C2576–C2609, C2614–C2625, C2619–C2634, C2636–C2645, C2652–C2668, C2662–C2677, C2679–C2688, C2868–C2895, C2900–C2911, C2905–C2920, C2922–C2931, C2937–C2948, C2942–C2958, and C2960–C2969. The Laminin G-like 3 domain maps to 2419–2609 (SGTDAFGYTS…PNAGRSVGQC (191 aa)). 2 consecutive EGF-like domains span residues 2610 to 2646 (HASP…SFCT) and 2648 to 2689 (TVST…IYCE). One can recognise a Laminin G-like 4 domain in the interval 2717–2895 (DPSFRSNELS…AKGGSNVGDC (179 aa)). EGF-like domains are found at residues 2896 to 2932 (DGTA…NTCN) and 2933 to 2970 (QSVS…RYCE). In terms of domain architecture, Laminin G-like 5 spans 2975 to 3165 (FSTAKFMGNS…YDGDEQNEVT (191 aa)).

Belongs to the EYS family. Expressed in retina (at protein level). Isoform 1: Detected in retina. Isoform 2: Detected in retina. Isoform 3: Strongly expressed in retina and testis. Isoform 4: Strongly expressed in testis, and weakly expressed in retina.

It is found in the cell projection. Its subcellular location is the cilium. It localises to the photoreceptor outer segment. The protein resides in the cytoplasm. The protein localises to the cytoskeleton. It is found in the cilium axoneme. Its subcellular location is the microtubule organizing center. It localises to the centrosome. The protein resides in the secreted. The protein localises to the extracellular space. It is found in the extracellular matrix. Its subcellular location is the interphotoreceptor matrix. Functionally, required to maintain the integrity of photoreceptor cells. Specifically required for normal morphology of the photoreceptor ciliary pocket, and might thus facilitate protein trafficking between the photoreceptor inner and outer segments via the transition zone. This is Protein eyes shut homolog (EYS) from Homo sapiens (Human).